A 209-amino-acid chain; its full sequence is Molybdenum cofactor guanylyltransferase (209 aa).

GTP-binding positions include 13-15 (LAG), lysine 26, asparagine 54, aspartate 74, and aspartate 104. Position 104 (aspartate 104) interacts with Mg(2+).

This sequence belongs to the MobA family. As to quaternary structure, monomer. It depends on Mg(2+) as a cofactor.

It localises to the cytoplasm. The enzyme catalyses Mo-molybdopterin + GTP + H(+) = Mo-molybdopterin guanine dinucleotide + diphosphate. Functionally, transfers a GMP moiety from GTP to Mo-molybdopterin (Mo-MPT) cofactor (Moco or molybdenum cofactor) to form Mo-molybdopterin guanine dinucleotide (Mo-MGD) cofactor. The polypeptide is Molybdenum cofactor guanylyltransferase (Acinetobacter baumannii (strain ATCC 17978 / DSM 105126 / CIP 53.77 / LMG 1025 / NCDC KC755 / 5377)).